The sequence spans 248 residues: NADP-dependent 3-hydroxy acid dehydrogenase YdfG (248 aa).

Residues 7–12 (GATAGF), 32–33 (RR), 54–55 (DV), and asparagine 81 contribute to the NADP(+) site. A substrate-binding site is contributed by serine 134. Residues tyrosine 147, lysine 151, and 177–185 (PGLVGGTEF) each bind NADP(+). Tyrosine 147 functions as the Proton acceptor in the catalytic mechanism.

It belongs to the short-chain dehydrogenases/reductases (SDR) family. Homotetramer.

The catalysed reaction is 3-hydroxypropanoate + NADP(+) = 3-oxopropanoate + NADPH + H(+). It catalyses the reaction L-allo-threonine + NADP(+) = aminoacetone + CO2 + NADPH. NADP-dependent dehydrogenase with broad substrate specificity acting on 3-hydroxy acids. Catalyzes the NADP-dependent oxidation of L-allo-threonine to L-2-amino-3-keto-butyrate, which is spontaneously decarboxylated into aminoacetone. Also acts on D-threonine, L-serine, D-serine, D-3-hydroxyisobutyrate, L-3-hydroxyisobutyrate, D-glycerate and L-glycerate. Able to catalyze the reduction of the malonic semialdehyde to 3-hydroxypropionic acid. YdfG is apparently supplementing RutE, the presumed malonic semialdehyde reductase involved in pyrimidine degradation since both are able to detoxify malonic semialdehyde. The sequence is that of NADP-dependent 3-hydroxy acid dehydrogenase YdfG from Escherichia coli O157:H7.